The sequence spans 270 residues: tRNA pseudouridine synthase A (270 aa).

Residue Asp60 is the Nucleophile of the active site. Positions 107–111 (FHARF) are RNA binding. Tyr118 provides a ligand contact to substrate. The tract at residues 168–172 (QCQSR) is interaction with tRNA.

The protein belongs to the tRNA pseudouridine synthase TruA family. As to quaternary structure, homodimer.

The catalysed reaction is uridine(38/39/40) in tRNA = pseudouridine(38/39/40) in tRNA. In terms of biological role, formation of pseudouridine at positions 38, 39 and 40 in the anticodon stem and loop of transfer RNAs. In Escherichia coli O139:H28 (strain E24377A / ETEC), this protein is tRNA pseudouridine synthase A.